Reading from the N-terminus, the 644-residue chain is Exoribonuclease 2 (644 aa).

The RNB domain maps to 189–516 (REDLTALNFV…NHRLLKAIIA (328 aa)). One can recognise an S1 motif domain in the interval 561-643 (DERFNAEIID…ETRSVIARPA (83 aa)).

It belongs to the RNR ribonuclease family. RNase II subfamily.

The protein localises to the cytoplasm. The catalysed reaction is Exonucleolytic cleavage in the 3'- to 5'-direction to yield nucleoside 5'-phosphates.. Its function is as follows. Involved in mRNA degradation. Hydrolyzes single-stranded polyribonucleotides processively in the 3' to 5' direction. The polypeptide is Exoribonuclease 2 (Serratia proteamaculans (strain 568)).